Consider the following 233-residue polypeptide: MNGVYDVGGTDGLGPINRPADEPVFRAEWEKVAFAMFPATFRAGFMGLDEFRFGIEQMNPAEYLESPYYWHWIRTYIHHGVRTGKIDLEELERRTQYYRENPDAPLPEHEQKPELIEFVNQAVYGGLPASREVDRPPKFKEGDVVRFSTASPKGHARRARYVRGKTGTVVKHHGAYIYPDTAGNGLGECPEHLYTVRFTAQELWGPEGDPNSSVYYDCWEPYIELVDTKAAAA.

The protein belongs to the nitrile hydratase subunit beta family. As to quaternary structure, heterotetramer of two alpha and two beta chains.

The catalysed reaction is an aliphatic primary amide = an aliphatic nitrile + H2O. Its function is as follows. NHase catalyzes the hydration of various nitrile compounds to the corresponding amides. The sequence is that of Cobalt-containing nitrile hydratase subunit beta from Pseudonocardia thermophila.